Reading from the N-terminus, the 341-residue chain is Hypophosphite import ATP-binding protein HtxD (341 aa).

The ABC transporter domain occupies 6–249 (LQLKNVGKSY…RVHALYQVPA (244 aa)). 38–45 (GTSGAGKS) serves as a coordination point for ATP. A disordered region spans residues 278-341 (IHTPHTRAAP…TGRGQDRGPG (64 aa)). Composition is skewed to basic and acidic residues over residues 307–320 (ADRR…DRTT) and 327–341 (GGHD…RGPG).

It belongs to the ABC transporter superfamily. Phosphonates importer (TC 3.A.1.9.1) family. The complex is composed of two ATP-binding proteins (HtxD), two transmembrane proteins (HtxC and HtxE) and a solute-binding protein (HtxB).

The protein localises to the cell inner membrane. It catalyses the reaction phosphinate(out) + ATP + H2O = phosphinate(in) + ADP + phosphate + H(+). In terms of biological role, part of the ABC transporter complex HtxBCDE involved in hypophosphite import. Responsible for energy coupling to the transport system. The protein is Hypophosphite import ATP-binding protein HtxD (htxD) of Stutzerimonas stutzeri (Pseudomonas stutzeri).